The chain runs to 348 residues: Organic solute transporter alpha-like protein 3 (348 aa).

Residues 1 to 49 (MAKEHGAMRSVLNLIGSVMLPQDTSNCSDRHDTPSAPEFLSHLQPFQTV) are Extracellular-facing. N-linked (GlcNAc...) asparagine glycosylation is present at Asn-26. The chain crosses the membrane as a helical span at residues 50–70 (LLSIASFSTTIVLCLSLIHWF). Over 71-84 (YVYKYVSIEKRRNK) the chain is Cytoplasmic. Residues 85-105 (LYWLIAVFPVACSCSFIAMCV) traverse the membrane as a helical segment. The Extracellular portion of the chain corresponds to 106–109 (PRTA). The helical transmembrane segment at 110–130 (VILTCIGVLYYLMCLFVIVSL) threads the bilayer. The Cytoplasmic portion of the chain corresponds to 131–180 (ARHLFGGRESFSTCLQYDDRPIDFRSPPFCCIIPKLPTARSTEKNIRRLE). The chain crosses the membrane as a helical span at residues 181–201 (WCVLQAPIVRSIIIFLDVVAV). Residues 202 to 213 (AEMREDATPYIR) are Extracellular-facing. A helical membrane pass occupies residues 214-234 (YSDMASLCSLLLAIFGVHTLA). Residues 235–240 (RVTSNK) are Cytoplasmic-facing. The chain crosses the membrane as a helical span at residues 241–261 (LSAYCFMSMFRLVDISLLFFS). The Extracellular segment spans residues 262-291 (AQQPMIFQNVLLRFNLISCGPLLNAQENAY). The chain crosses the membrane as a helical span at residues 292-312 (FVCNFIITCEMLLLSVLATWL). The Cytoplasmic segment spans residues 313–348 (LAPRHNAMFDAYRPSMALSETTASLNETEQSMILDH).

Belongs to the OST-alpha family.

The protein localises to the cell membrane. Probable transporter. This chain is Organic solute transporter alpha-like protein 3 (osta-3), found in Caenorhabditis elegans.